A 274-amino-acid polypeptide reads, in one-letter code: Diaminopimelate epimerase (274 aa).

Substrate-binding residues include Asn-11, Gln-44, and Asn-64. Catalysis depends on Cys-73, which acts as the Proton donor. Substrate is bound by residues 74 to 75 (GN), Asn-157, Asn-190, and 208 to 209 (ER). The Proton acceptor role is filled by Cys-217. Substrate is bound at residue 218-219 (GS).

The protein belongs to the diaminopimelate epimerase family. In terms of assembly, homodimer.

The protein resides in the cytoplasm. The enzyme catalyses (2S,6S)-2,6-diaminopimelate = meso-2,6-diaminopimelate. It functions in the pathway amino-acid biosynthesis; L-lysine biosynthesis via DAP pathway; DL-2,6-diaminopimelate from LL-2,6-diaminopimelate: step 1/1. In terms of biological role, catalyzes the stereoinversion of LL-2,6-diaminopimelate (L,L-DAP) to meso-diaminopimelate (meso-DAP), a precursor of L-lysine and an essential component of the bacterial peptidoglycan. The polypeptide is Diaminopimelate epimerase (Pectobacterium carotovorum subsp. carotovorum (strain PC1)).